The primary structure comprises 93 residues: HIG1 domain family member 1A, mitochondrial (93 aa).

An N-acetylserine modification is found at Ser-2. One can recognise an HIG1 domain in the interval 2–93; it reads STNTDLSLSS…YQEFWAKRKP (92 aa). Ser-8 is subject to Phosphoserine. The next 2 membrane-spanning stretches (helical) occupy residues 28–48 and 69–89; these read PFVPIGMAGFAAIVAYGLYKL and GFVVGAMTLGMGYSMYQEFWA. Over 90–93 the chain is Mitochondrial matrix; the sequence is KRKP.

As to quaternary structure, associates with cytochrome c oxidase (COX, complex IV); proposed complex component. Also associates with respiratory chain supercomplexes. As to expression, expressed in brain and spinal cord.

Its subcellular location is the mitochondrion membrane. It is found in the mitochondrion inner membrane. Proposed subunit of cytochrome c oxidase (COX, complex IV), which is the terminal component of the mitochondrial respiratory chain that catalyzes the reduction of oxygen to water. May play a role in the assembly of respiratory supercomplexes. The polypeptide is HIG1 domain family member 1A, mitochondrial (Higd1a) (Rattus norvegicus (Rat)).